The primary structure comprises 303 residues: Ferrochelatase (303 aa).

2 residues coordinate Fe cation: H185 and E262.

The protein belongs to the ferrochelatase family.

It is found in the cytoplasm. It catalyses the reaction heme b + 2 H(+) = protoporphyrin IX + Fe(2+). It participates in porphyrin-containing compound metabolism; protoheme biosynthesis; protoheme from protoporphyrin-IX: step 1/1. Functionally, catalyzes the ferrous insertion into protoporphyrin IX. The sequence is that of Ferrochelatase from Campylobacter jejuni subsp. doylei (strain ATCC BAA-1458 / RM4099 / 269.97).